The sequence spans 132 residues: Small ribosomal subunit protein uS8 (132 aa).

This sequence belongs to the universal ribosomal protein uS8 family. As to quaternary structure, part of the 30S ribosomal subunit. Contacts proteins S5 and S12.

Its function is as follows. One of the primary rRNA binding proteins, it binds directly to 16S rRNA central domain where it helps coordinate assembly of the platform of the 30S subunit. This Halalkalibacterium halodurans (strain ATCC BAA-125 / DSM 18197 / FERM 7344 / JCM 9153 / C-125) (Bacillus halodurans) protein is Small ribosomal subunit protein uS8.